We begin with the raw amino-acid sequence, 205 residues long: Methyltransferase-like 26 B (205 aa).

Belongs to the UPF0585 family.

The polypeptide is Methyltransferase-like 26 B (Danio rerio (Zebrafish)).